The sequence spans 1193 residues: MAGHDVQYGKHRTRRSFSRIKEVLGLPNLIEIQTDSFKEFLDTGLKEVFEDVLPISNFTDTMELEFVGYELKEPKYTLEEARIHDASYSAPIFVTFRLINKETGEIKTQEVFFGDFPIMTEMGTFIINGGERIIVSQLVRSPGVYFNDKVDKNGKVGYGSTVIPNRGAWLELETDSKDIAYTRIDRTRKIPFTTLVRALGFSGDDEIVDIFGDSELVRNTIEKDIHKNPADSRTDEALKEIYERLRPGEPKTADSSRSLLVARFFDPRRYDLAAVGRYKLNKKLNIKTRLLGQTIAENLVDPETGEILVEAGTEMTRDVIDSIAEHLDGDLNKFVYTPNDYAVVTEPVVLQKFKVVAPNDPDRVVTIVGNANPDDKVRALTTADILAEMSYFLNLAEGIGKVDDIDHLGNRRVRAVGELLANQFRIGLARMERNVRERMSVQDNEALTPQQIINIRPVTAAVKEFFGSSQLSQFMDQHNPLSELSHKRRLSALGPGGLTRDRAGYEVRDVHYTHYGRMCPIETPEGPNIGLINNLSTYGRLNKYGFIQTPYRKVDRATGKVTNEVVWLTADEEDEYIVAQANSKLNEDGTFAEEIVMGRHQGVNQEYPSHLVDFVDVSPKQVVAVATACIPFLENDDSNRALMGANMQRQAVPLIDPKAPFVGTGMEYQAAHDSGAAVIAKHDGKVVYSDADKVEVRREDGSLDVYTIQKFRRSNSGTAYNQRTLVKVGDIVEKGDFIADGPSMEGGEMALGQNPIVAYMTWEGYNFEDAVIMSERLVKDDVYTSVHLEEFESETRDTKLGPEEITRELPNVSEEALKNLDEMGIIRIGAEVKEGDILVGKVTPKGEKDLSAEERLLHAIFGDKSREVRDTSLRVPHGGDGVVRDVKIFTRANGDELQSGVNMLVRVYIAQKRKIKVGDKMAGRHGNKGVVSRIVPVEDMPYLPDGTPVDIMLNPLGVPSRMNIGQVMELHLGMAARNLGIYIATPVFDGASSEDLWDTVREAGMDSDAKTILYDGRTGEPFDNRVSVGVMYMIKLHHMVDDKLHARSVGPYSLVTQQPLGGKAQFGGQRFGEMEVWALEAYGASNILQEILTYKSDDVNGRLKAYEAITKGKPIPKPGVPESFRVLVKELQSLGLDMRVLDEDDYEVELRDLDEGEDDDVMHVDDLEKARVQQAKEAAELEKAKEEALDKTE.

Positions 1173-1193 are disordered; it reads QQAKEAAELEKAKEEALDKTE. Residues 1177 to 1193 are compositionally biased toward basic and acidic residues; the sequence is EAAELEKAKEEALDKTE.

Belongs to the RNA polymerase beta chain family. In terms of assembly, the RNAP catalytic core consists of 2 alpha, 1 beta, 1 beta' and 1 omega subunit. When a sigma factor is associated with the core the holoenzyme is formed, which can initiate transcription.

The enzyme catalyses RNA(n) + a ribonucleoside 5'-triphosphate = RNA(n+1) + diphosphate. Its function is as follows. DNA-dependent RNA polymerase catalyzes the transcription of DNA into RNA using the four ribonucleoside triphosphates as substrates. The chain is DNA-directed RNA polymerase subunit beta from Streptococcus thermophilus (strain CNRZ 1066).